The chain runs to 200 residues: dTTP/UTP pyrophosphatase (200 aa).

Residue Asp81 is the Proton acceptor of the active site.

The protein belongs to the Maf family. YhdE subfamily. Requires a divalent metal cation as cofactor.

It is found in the cytoplasm. It carries out the reaction dTTP + H2O = dTMP + diphosphate + H(+). It catalyses the reaction UTP + H2O = UMP + diphosphate + H(+). In terms of biological role, nucleoside triphosphate pyrophosphatase that hydrolyzes dTTP and UTP. May have a dual role in cell division arrest and in preventing the incorporation of modified nucleotides into cellular nucleic acids. The protein is dTTP/UTP pyrophosphatase of Cupriavidus pinatubonensis (strain JMP 134 / LMG 1197) (Cupriavidus necator (strain JMP 134)).